A 132-amino-acid polypeptide reads, in one-letter code: Small ribosomal subunit protein uS8c (132 aa).

The protein belongs to the universal ribosomal protein uS8 family. In terms of assembly, part of the 30S ribosomal subunit.

Its subcellular location is the plastid. It localises to the chloroplast. Its function is as follows. One of the primary rRNA binding proteins, it binds directly to 16S rRNA central domain where it helps coordinate assembly of the platform of the 30S subunit. The protein is Small ribosomal subunit protein uS8c (rps8) of Gracilaria tenuistipitata var. liui (Red alga).